The primary structure comprises 157 residues: Heavy metal-associated isoprenylated plant protein 16 (157 aa).

The region spanning 2–71 (KQKILIRIAM…KVAFAELVSV (70 aa)) is the HMA domain. Residues 73 to 115 (KVEPPKDGDKKPEEEKKPEEKKPEEKKPEEKKPEPCCQPWQKP) are disordered. Basic and acidic residues predominate over residues 75–106 (EPPKDGDKKPEEEKKPEEKKPEEKKPEEKKPE). Cys154 is modified (cysteine methyl ester). Cys154 is lipidated: S-farnesyl cysteine. A propeptide spans 155 to 157 (RIM) (removed in mature form).

It belongs to the HIPP family.

Functionally, probable heavy-metal-binding protein. This chain is Heavy metal-associated isoprenylated plant protein 16, found in Arabidopsis thaliana (Mouse-ear cress).